A 201-amino-acid polypeptide reads, in one-letter code: Glutathione peroxidase 1 (201 aa).

Residue Ser32 is modified to Phosphoserine. The active site involves Sec47. Position 47 (Sec47) is a non-standard amino acid, selenocysteine. Residues Lys86, Lys112, and Lys146 each carry the N6-acetyllysine; alternate modification. Residues Lys86, Lys112, and Lys146 each carry the N6-succinyllysine; alternate modification. Phosphoserine is present on residues Ser195 and Ser199.

It belongs to the glutathione peroxidase family. In terms of assembly, homotetramer. Interacts with MIEN1. Post-translationally, during periods of oxidative stress, Sec-47 may react with a superoxide radical, irreversibly lose hydroselenide and be converted to dehydroalanine.

The protein resides in the cytoplasm. The protein localises to the mitochondrion. It catalyses the reaction 2 glutathione + H2O2 = glutathione disulfide + 2 H2O. The catalysed reaction is a hydroperoxy polyunsaturated fatty acid + 2 glutathione = a hydroxy polyunsaturated fatty acid + glutathione disulfide + H2O. The enzyme catalyses tert-butyl hydroperoxide + 2 glutathione = tert-butanol + glutathione disulfide + H2O. It carries out the reaction cumene hydroperoxide + 2 glutathione = 2-phenylpropan-2-ol + glutathione disulfide + H2O. It catalyses the reaction (13S)-hydroperoxy-(9Z,11E)-octadecadienoate + 2 glutathione = (13S)-hydroxy-(9Z,11E)-octadecadienoate + glutathione disulfide + H2O. The catalysed reaction is (9S)-hydroperoxy-(10E,12Z)-octadecadienoate + 2 glutathione = (9S)-hydroxy-(10E,12Z)-octadecadienoate + glutathione disulfide + H2O. The enzyme catalyses (5S)-hydroperoxy-(6E,8Z,11Z,14Z)-eicosatetraenoate + 2 glutathione = (5S)-hydroxy-(6E,8Z,11Z,14Z)-eicosatetraenoate + glutathione disulfide + H2O. It carries out the reaction (12S)-hydroperoxy-(5Z,8Z,10E,14Z)-eicosatetraenoate + 2 glutathione = (12S)-hydroxy-(5Z,8Z,10E,14Z)-eicosatetraenoate + glutathione disulfide + H2O. It catalyses the reaction (12R)-hydroperoxy-(5Z,8Z,10E,14Z)-eicosatetraenoate + 2 glutathione = (12R)-hydroxy-(5Z,8Z,10E,14Z)-eicosatetraenoate + glutathione disulfide + H2O. The catalysed reaction is (15S)-hydroperoxy-(5Z,8Z,11Z,13E)-eicosatetraenoate + 2 glutathione = (15S)-hydroxy-(5Z,8Z,11Z,13E)-eicosatetraenoate + glutathione disulfide + H2O. The enzyme catalyses (5S)-hydroperoxy-(6E,8Z,11Z,14Z,17Z)-eicosapentaenoate + 2 glutathione = (5S)-hydroxy-(6E,8Z,11Z,14Z,17Z)-eicosapentaenoate + glutathione disulfide + H2O. It carries out the reaction (12S)-hydroperoxy-(5Z,8Z,10E,14Z,17Z)-eicosapentaenoate + 2 glutathione = (12S)-hydroxy-(5Z,8Z,10E,14Z,17Z)-eicosapentaenoate + glutathione disulfide + H2O. It catalyses the reaction (15S)-hydroperoxy-(5Z,8Z,11Z,13E,17Z)-eicosapentaenoate + 2 glutathione = (15S)-hydroxy-(5Z,8Z,11Z,13E,17Z)-eicosapentaenoate + glutathione disulfide + H2O. The catalysed reaction is (15S)-hydroperoxy-(11Z,13E)-eicosadienoate + 2 glutathione = (15S)-hydroxy-(11Z,13E)-eicosadienoate + glutathione disulfide + H2O. The enzyme catalyses (17S)-hydroperoxy-(4Z,7Z,10Z,13Z,15E,19Z)-docosahexaenoate + 2 glutathione = (17S)-hydroxy-(4Z,7Z,10Z,13Z,15E,19Z)-docosahexaenoate + glutathione disulfide + H2O. In terms of biological role, catalyzes the reduction of hydroperoxides in a glutathione-dependent manner thus regulating cellular redox homeostasis. Can reduce small soluble hydroperoxides such as H2O2, cumene hydroperoxide and tert-butyl hydroperoxide, as well as several fatty acid-derived hydroperoxides. In platelets catalyzes the reduction of 12-hydroperoxyeicosatetraenoic acid, the primary product of the arachidonate 12-lipoxygenase pathway. This Callithrix jacchus (White-tufted-ear marmoset) protein is Glutathione peroxidase 1 (GPX1).